Here is a 481-residue protein sequence, read N- to C-terminus: Threonine synthase (481 aa).

The residue at position 118 (lysine 118) is an N6-(pyridoxal phosphate)lysine.

The protein belongs to the threonine synthase family. As to quaternary structure, monomer. Requires pyridoxal 5'-phosphate as cofactor.

It catalyses the reaction O-phospho-L-homoserine + H2O = L-threonine + phosphate. It participates in amino-acid biosynthesis; L-threonine biosynthesis; L-threonine from L-aspartate: step 5/5. Functionally, catalyzes the gamma-elimination of phosphate from L-phosphohomoserine and the beta-addition of water to produce L-threonine. This is Threonine synthase (thrC) from Corynebacterium glutamicum (strain ATCC 13032 / DSM 20300 / JCM 1318 / BCRC 11384 / CCUG 27702 / LMG 3730 / NBRC 12168 / NCIMB 10025 / NRRL B-2784 / 534).